The sequence spans 559 residues: Membrane protein insertase YidC (559 aa).

6 consecutive transmembrane segments (helical) span residues 5-25, 332-352, 355-375, 429-449, 474-494, and 520-540; these read IVNL…WQYF, AIDF…MNFF, YVGN…LLMF, LPIL…YVTI, LFGL…WPIL, and FMPL…LIYW.

Belongs to the OXA1/ALB3/YidC family. Type 1 subfamily. Interacts with the Sec translocase complex via SecD. Specifically interacts with transmembrane segments of nascent integral membrane proteins during membrane integration.

Its subcellular location is the cell inner membrane. Its function is as follows. Required for the insertion and/or proper folding and/or complex formation of integral membrane proteins into the membrane. Involved in integration of membrane proteins that insert both dependently and independently of the Sec translocase complex, as well as at least some lipoproteins. Aids folding of multispanning membrane proteins. This chain is Membrane protein insertase YidC, found in Rickettsia bellii (strain OSU 85-389).